Reading from the N-terminus, the 235-residue chain is Peptidase E (235 aa).

Catalysis depends on charge relay system residues Ser122, Asp137, and His159.

The protein belongs to the peptidase S51 family.

It is found in the cytoplasm. It carries out the reaction Dipeptidase E catalyzes the hydrolysis of dipeptides Asp-|-Xaa. It does not act on peptides with N-terminal Glu, Asn or Gln, nor does it cleave isoaspartyl peptides.. Functionally, hydrolyzes dipeptides containing N-terminal aspartate residues. May play a role in allowing the cell to use peptide aspartate to spare carbon otherwise required for the synthesis of the aspartate family of amino acids. The protein is Peptidase E of Shewanella denitrificans (strain OS217 / ATCC BAA-1090 / DSM 15013).